Reading from the N-terminus, the 383-residue chain is Peroxisomal membrane protein PEX15 (383 aa).

The Cytoplasmic segment spans residues 1-331 (MAASEIMNNL…AVLKHHFTRS (331 aa)). A helical transmembrane segment spans residues 332–349 (VLNKNGLLLTGLLLLLCL). The Lumenal segment spans residues 350-383 (KKYKSLMAIFKHVPAAFHTVYPQIVGLLKLLASI).

As to quaternary structure, interacts with PEX6. Interacts with PEX19; targets PEX15 to the peroxisome. Post-translationally, phosphorylated.

It is found in the peroxisome membrane. The protein resides in the endoplasmic reticulum membrane. Peroxisomal docking factor that anchors PEX1 and PEX6 to peroxisome membranes. PEX26 is therefore required for the formation of the PEX1-PEX6 AAA ATPase complex, a complex that mediates the extraction of the PEX5 receptor from peroxisomal membrane. The chain is Peroxisomal membrane protein PEX15 (PEX15) from Saccharomyces cerevisiae (strain ATCC 204508 / S288c) (Baker's yeast).